We begin with the raw amino-acid sequence, 63 residues long: Large ribosomal subunit protein uL29 (63 aa).

It belongs to the universal ribosomal protein uL29 family.

The chain is Large ribosomal subunit protein uL29 from Bdellovibrio bacteriovorus (strain ATCC 15356 / DSM 50701 / NCIMB 9529 / HD100).